We begin with the raw amino-acid sequence, 231 residues long: Killer cell lectin-like receptor subfamily F member 1 (231 aa).

Residues 1–38 (MQDEERYMTLNVQSKKRSSAQTSQLTFKDYSVTLHWYK) are Cytoplasmic-facing. Tyr-7 carries the post-translational modification Phosphotyrosine. The helical; Signal-anchor for type II membrane protein transmembrane segment at 39-59 (ILLGISGTVNGILTLTLISLI) threads the bilayer. Residues 60–231 (LLVSQGVLLK…SSVFKWICQY (172 aa)) are Extracellular-facing. N-linked (GlcNAc...) asparagine glycans are attached at residues Asn-77, Asn-91, Asn-96, and Asn-176. The 110-residue stretch at 121–230 (YQGKCYWFSN…CSSVFKWICQ (110 aa)) folds into the C-type lectin domain. Intrachain disulfides connect Cys-142-Cys-229 and Cys-208-Cys-221.

In terms of assembly, homodimer. Interacts with CLEC2B. In terms of processing, phosphorylated on Tyr-7; this phosphorylation is required for NKp80/KLRF1-mediated cytotoxicity. As to expression, strongly expressed in peripheral blood leukocytes and spleen, with weaker expression in lymph node and adult liver, and no expression detected in bone marrow, thymus, and fetal liver. Not expressed in brain, heart, placenta, lung, kidney, skeletal muscle, and pancreas. Within peripheral blood leukocyte and immunocyte cell lines, expression was predominant in NK cells but was also detected in monocytes.

The protein resides in the membrane. Functions as an activating receptor involved in immunosurveillance upon binding to various ligands displayed at the surface of myeloid cells. Upon interaction with CLEC2B ligand, stimulates NK-cell cytotoxicity and cytokine production leading to the cytolysis of malignant CLEC2B-expressing myeloid cells. Actviation of the common cytotoxicity pathway involves SRC and SYK kinases. This Homo sapiens (Human) protein is Killer cell lectin-like receptor subfamily F member 1 (KLRF1).